Consider the following 221-residue polypeptide: Chalcone--flavanone isomerase 2 (221 aa).

Residues threonine 50, asparagine 115, and serine 192 each contribute to the substrate site.

This sequence belongs to the chalcone isomerase family.

The catalysed reaction is a chalcone = a flavanone.. Its pathway is secondary metabolite biosynthesis; flavonoid biosynthesis. Catalyzes the intramolecular cyclization of bicyclic chalcones into tricyclic (S)-flavanones. Responsible for the isomerization of 4,2',4',6'-tetrahydroxychalcone (also termed chalcone) into naringenin. This is Chalcone--flavanone isomerase 2 (CHI2) from Lotus japonicus (Lotus corniculatus var. japonicus).